The chain runs to 239 residues: Lactate utilization protein A 2 (239 aa).

Belongs to the LutA/YkgE family.

Is involved in L-lactate degradation and allows cells to grow with lactate as the sole carbon source. In Bacillus mycoides (strain KBAB4) (Bacillus weihenstephanensis), this protein is Lactate utilization protein A 2.